The following is a 99-amino-acid chain: Small ribosomal subunit protein uS19 (99 aa).

It belongs to the universal ribosomal protein uS19 family.

Protein S19 forms a complex with S13 that binds strongly to the 16S ribosomal RNA. The polypeptide is Small ribosomal subunit protein uS19 (Sulfurihydrogenibium sp. (strain YO3AOP1)).